A 327-amino-acid chain; its full sequence is Transaldolase (327 aa).

The active-site Schiff-base intermediate with substrate is the K132.

This sequence belongs to the transaldolase family. Type 1 subfamily.

Its subcellular location is the cytoplasm. It catalyses the reaction D-sedoheptulose 7-phosphate + D-glyceraldehyde 3-phosphate = D-erythrose 4-phosphate + beta-D-fructose 6-phosphate. It participates in carbohydrate degradation; pentose phosphate pathway; D-glyceraldehyde 3-phosphate and beta-D-fructose 6-phosphate from D-ribose 5-phosphate and D-xylulose 5-phosphate (non-oxidative stage): step 2/3. In terms of biological role, transaldolase is important for the balance of metabolites in the pentose-phosphate pathway. This is Transaldolase from Chlamydia muridarum (strain MoPn / Nigg).